We begin with the raw amino-acid sequence, 372 residues long: N-methyl-L-tryptophan oxidase (372 aa).

4–34 (DLIIIGSGSVGAAAGYYATRAGLNVLMTDAH) contributes to the FAD binding site. C308 carries the post-translational modification S-8alpha-FAD cysteine.

It belongs to the MSOX/MTOX family. MTOX subfamily. As to quaternary structure, monomer. The cofactor is FAD.

It catalyses the reaction N(alpha)-methyl-L-tryptophan + O2 + H2O = L-tryptophan + formaldehyde + H2O2. In terms of biological role, catalyzes the oxidative demethylation of N-methyl-L-tryptophan. The chain is N-methyl-L-tryptophan oxidase from Escherichia coli O139:H28 (strain E24377A / ETEC).